The primary structure comprises 330 residues: Stimulated by retinoic acid gene 8 protein homolog (330 aa).

Residues 50-55 carry the Nuclear localization signal (NLS) motif; it reads RVARRR. Residues 88–112 are a coiled coil; it reads QVLNKAKSHIPELEQTLDNLLKLKA.

As to quaternary structure, interacts with XPO1. Interacts with MEIOSIN. Phosphorylated. As to expression, expressed specifically in testis and fetal ovaries.

The protein resides in the cytoplasm. It is found in the nucleus. Its function is as follows. Meiosis-inducer required for the transition into meiosis for both female and male germ cells. In female germ cells, acts downstream of ZGLP1 as a key effector of the meiotic program: required for premeiotic DNA replication and subsequent events in meiotic prophase. During spermatogenesis, next to its role in meiotic initiation, promotes (but is not required for) spermatogonial differentiation. In complex with MEIOSIN, directly activates the transcription of a subset of critical meiotic genes playing a central role in cell-cycle switching from mitosis to meiosis. The sequence is that of Stimulated by retinoic acid gene 8 protein homolog from Homo sapiens (Human).